Consider the following 320-residue polypeptide: 3'-5' exoribonuclease YhaM (320 aa).

Residues 18–90 (FLIKSATKAV…QLKIGSIRPT (73 aa)) constitute a DNA-binding region (OB). In terms of domain architecture, HD spans 163–279 (HVVCMLNVAK…LHMIDNIDAK (117 aa)).

The protein belongs to the YhaM family.

Its function is as follows. Shows a 3'-5' exoribonuclease activity. The chain is 3'-5' exoribonuclease YhaM from Halalkalibacterium halodurans (strain ATCC BAA-125 / DSM 18197 / FERM 7344 / JCM 9153 / C-125) (Bacillus halodurans).